We begin with the raw amino-acid sequence, 270 residues long: MIOREX complex component 3 (270 aa).

A mitochondrion-targeting transit peptide spans M1–V12.

In terms of assembly, associates with the mitochondrial ribosome.

The protein localises to the mitochondrion. Its function is as follows. Component of MIOREX complexes, large expressome-like assemblies of ribosomes with factors involved in all the steps of post-transcriptional gene expression. The protein is MIOREX complex component 3 of Saccharomyces cerevisiae (strain ATCC 204508 / S288c) (Baker's yeast).